We begin with the raw amino-acid sequence, 127 residues long: Large ribosomal subunit protein eL32 (127 aa).

A compositionally biased stretch (basic and acidic residues) spans 37-48 (KWRKPKGTDSKM). Residues 37–65 (KWRKPKGTDSKMRVKLKGKARSPSIGWSS) are disordered.

It belongs to the eukaryotic ribosomal protein eL32 family.

The polypeptide is Large ribosomal subunit protein eL32 (Thermococcus sibiricus (strain DSM 12597 / MM 739)).